Consider the following 250-residue polypeptide: tRNA-splicing endonuclease subunit Sen2-2 (250 aa).

Active-site residues include Y148, H156, and K189. The disordered stretch occupies residues 225-250 (SPELSREDQSTNSKQHVPNVSNLNTL). Polar residues predominate over residues 234–250 (STNSKQHVPNVSNLNTL).

This sequence belongs to the tRNA-intron endonuclease family. As to quaternary structure, tRNA splicing endonuclease is a heterotetramer composed of SEN2, SEN15, SEN34/LENG5 and SEN54.

It is found in the nucleus. The enzyme catalyses pretRNA = a 3'-half-tRNA molecule with a 5'-OH end + a 5'-half-tRNA molecule with a 2',3'-cyclic phosphate end + an intron with a 2',3'-cyclic phosphate and a 5'-hydroxyl terminus.. Constitutes one of the two catalytic subunit of the tRNA-splicing endonuclease complex, a complex responsible for identification and cleavage of the splice sites in pre-tRNA. It cleaves pre-tRNA at the 5'- and 3'-splice sites to release the intron. The products are an intron and two tRNA half-molecules bearing 2',3'-cyclic phosphate and 5'-OH termini. There are no conserved sequences at the splice sites, but the intron is invariably located at the same site in the gene, placing the splice sites an invariant distance from the constant structural features of the tRNA body. Probably carries the active site for 5'-splice site cleavage. This chain is tRNA-splicing endonuclease subunit Sen2-2 (SEN2), found in Arabidopsis thaliana (Mouse-ear cress).